A 189-amino-acid chain; its full sequence is Glycerol-3-phosphate acyltransferase (189 aa).

The next 5 membrane-spanning stretches (helical) occupy residues 1–21, 51–71, 77–97, 111–131, and 151–171; these read MFWL…AILL, LAIL…LIAS, LQDQ…PLYF, MLLG…LLTF, and LLAW…LLIV.

This sequence belongs to the PlsY family. As to quaternary structure, probably interacts with PlsX.

It localises to the cell inner membrane. The catalysed reaction is an acyl phosphate + sn-glycerol 3-phosphate = a 1-acyl-sn-glycero-3-phosphate + phosphate. Its pathway is lipid metabolism; phospholipid metabolism. Catalyzes the transfer of an acyl group from acyl-phosphate (acyl-PO(4)) to glycerol-3-phosphate (G3P) to form lysophosphatidic acid (LPA). This enzyme utilizes acyl-phosphate as fatty acyl donor, but not acyl-CoA or acyl-ACP. The protein is Glycerol-3-phosphate acyltransferase of Pseudomonas fluorescens (strain Pf0-1).